The sequence spans 219 residues: uncharacterized protein (219 aa).

2 helical membrane-spanning segments follow: residues 8–28 (MILF…TLSV) and 194–214 (GIPG…GLLF).

It is found in the cell membrane. This is an uncharacterized protein from Archaeoglobus fulgidus (strain ATCC 49558 / DSM 4304 / JCM 9628 / NBRC 100126 / VC-16).